Consider the following 209-residue polypeptide: NDR1/HIN1-like protein 1 (209 aa).

Residues 18-38 (IFWSIIFVLFIIFLTILLIWA) traverse the membrane as a helical segment. The N-linked (GlcNAc...) asparagine glycan is linked to asparagine 58.

Expressed in rosette leaves, cauline leaves, stems, and siliques, and at lower levels in roots and flowers.

The protein resides in the cell membrane. In terms of biological role, may play a role in plant immunity. This chain is NDR1/HIN1-like protein 1, found in Arabidopsis thaliana (Mouse-ear cress).